A 383-amino-acid chain; its full sequence is Alkanesulfonate monooxygenase (383 aa).

Belongs to the SsuD family. In terms of assembly, homotetramer.

It carries out the reaction an alkanesulfonate + FMNH2 + O2 = an aldehyde + FMN + sulfite + H2O + 2 H(+). Functionally, catalyzes the desulfonation of aliphatic sulfonates. This chain is Alkanesulfonate monooxygenase, found in Erwinia pyrifoliae (strain DSM 12163 / CIP 106111 / Ep16/96).